A 215-amino-acid chain; its full sequence is FGFR1 oncogene partner 2 homolog (215 aa).

Positions 35–183 (LLNKRVEAMK…SGLRELLGIS (149 aa)) form a coiled coil.

Belongs to the SIKE family.

Its subcellular location is the cytoplasm. This is FGFR1 oncogene partner 2 homolog (fgfr1op2) from Danio rerio (Zebrafish).